We begin with the raw amino-acid sequence, 199 residues long: Phosphatidylethanolamine N-methyltransferase (199 aa).

At Ser-2–Glu-12 the chain is on the lumenal side. An intramembrane region (helical) is located at residues Pro-13–Ala-33. Residues Arg-34 to Ala-45 are Lumenal-facing. The chain crosses the membrane as a helical span at residues Phe-46–Leu-66. Topologically, residues Arg-67–Gly-93 are cytoplasmic. Residues Leu-94–Thr-114 form a helical membrane-spanning segment. Gly-98 to Gly-100 is an S-adenosyl-L-methionine binding site. Residues Gly-115–His-157 lie on the Lumenal side of the membrane. A helical transmembrane segment spans residues Ala-158 to Leu-178. Residues Phe-179–Ser-199 lie on the Cytoplasmic side of the membrane. S-adenosyl-L-methionine is bound at residue Glu-180–Glu-181.

It belongs to the class VI-like SAM-binding methyltransferase superfamily. PEMT/PEM2 methyltransferase family. Expressed in liver (at protein level).

It localises to the endoplasmic reticulum membrane. The protein resides in the mitochondrion membrane. It catalyses the reaction a 1,2-diacyl-sn-glycero-3-phosphoethanolamine + S-adenosyl-L-methionine = a 1,2-diacyl-sn-glycero-3-phospho-N-methylethanolamine + S-adenosyl-L-homocysteine + H(+). It carries out the reaction a 1,2-diacyl-sn-glycero-3-phospho-N-methylethanolamine + S-adenosyl-L-methionine = a 1,2-diacyl-sn-glycero-3-phospho-N,N-dimethylethanolamine + S-adenosyl-L-homocysteine + H(+). The enzyme catalyses a 1,2-diacyl-sn-glycero-3-phospho-N,N-dimethylethanolamine + S-adenosyl-L-methionine = a 1,2-diacyl-sn-glycero-3-phosphocholine + S-adenosyl-L-homocysteine + H(+). The catalysed reaction is 1,2-di-(9Z-octadecenoyl)-sn-glycero-3-phosphoethanolamine + S-adenosyl-L-methionine = 1,2-di-(9Z-octadecenoyl)-sn-glycero-3-phospho-N-methylethanolamine + S-adenosyl-L-homocysteine + H(+). It catalyses the reaction 1,2-di-(9Z-octadecenoyl)-sn-glycero-3-phospho-N-methylethanolamine + S-adenosyl-L-methionine = 1,2-di-(9Z-octadecenoyl)-sn-glycero-3-phospho-N,N-dimethylethanolamine + S-adenosyl-L-homocysteine + H(+). It carries out the reaction 1,2-di-(9Z-octadecenoyl)-sn-glycero-3-phospho-N,N-dimethylethanolamine + S-adenosyl-L-methionine = 1,2-di-(9Z-octadecenoyl)-sn-glycero-3-phosphocholine + S-adenosyl-L-homocysteine + H(+). The enzyme catalyses 1,2-di-(9Z,12Z-octadecadienoyl)-sn-glycero-3-phosphoethanolamine + S-adenosyl-L-methionine = 1,2-di-(9Z,12Z-octadecadienoyl)-sn-glycero-3-phospho-N-methylethanolamine + S-adenosyl-L-homocysteine + H(+). The catalysed reaction is 1,2-di-(9Z,12Z-octadecadienoyl)-sn-glycero-3-phospho-N-methylethanolamine + S-adenosyl-L-methionine = 1,2-di-(9Z,12Z-octadecadienoyl)-sn-glycero-3-phospho-N,N-dimethylethanolamine + S-adenosyl-L-homocysteine + H(+). It catalyses the reaction 1,2-di-(9Z,12Z-octadecadienoyl)-sn-glycero-3-phospho-N,N-dimethylethanolamine + S-adenosyl-L-methionine = 1,2-di-(9Z,12Z-octadecadienoyl)-sn-glycero-3-phosphocholine + S-adenosyl-L-homocysteine + H(+). It carries out the reaction 1,2-di-(9Z,12Z,15Z-octadecatrienoyl)-sn-glycero-3-phosphoethanolamine + S-adenosyl-L-methionine = 1,2-di-(9Z,12Z,15Z-octadecatrienoyl)-sn-glycero-3-phospho-N-methylethanolamine + S-adenosyl-L-homocysteine + H(+). The enzyme catalyses 1,2-di-(9Z,12Z,15Z-octadecatrienoyl)-sn-glycero-3-phospho-N-methylethanolamine + S-adenosyl-L-methionine = 1,2-di-(9Z,12Z,15Z-octadecatrienoyl)-sn-glycero-3-phospho-N,N-dimethylethanolamine + S-adenosyl-L-homocysteine + H(+). The catalysed reaction is 1,2-di-(9Z,12Z,15Z-octadecatrienoyl)-sn-glycero-3-phospho-N,N-dimethylethanolamine + S-adenosyl-L-methionine = 1,2-di-(9Z,12Z,15Z-octadecatrienoyl)-sn-glycero-3-phosphocholine + S-adenosyl-L-homocysteine + H(+). It catalyses the reaction 1-hexadecanoyl-2-(4Z,7Z,10Z,13Z,16Z,19Z-docosahexaenoyl)-sn-glycero-3-phosphoethanolamine + S-adenosyl-L-methionine = 1-hexadecanoyl-2-(4Z,7Z,10Z,13Z,16Z,19Z-docosahexaenoyl)-sn-glycero-3-phospho-N-methylethanolamine + S-adenosyl-L-homocysteine + H(+). It carries out the reaction 1-hexadecanoyl-2-(4Z,7Z,10Z,13Z,16Z,19Z-docosahexaenoyl)-sn-glycero-3-phospho-N-methylethanolamine + S-adenosyl-L-methionine = 1-hexadecanoyl-2-(4Z,7Z,10Z,13Z,16Z,19Z-docosahexaenoyl)-sn-glycero-3-phospho-N,N-dimethylethanolamine + S-adenosyl-L-homocysteine + H(+). The enzyme catalyses 1-hexadecanoyl-2-(4Z,7Z,10Z,13Z,16Z,19Z-docosahexaenoyl)-sn-glycero-3-phospho-N,N-dimethylethanolamine + S-adenosyl-L-methionine = 1-hexadecanoyl-2-(4Z,7Z,10Z,13Z,16Z,19Z-docosahexaenoyl)-sn-glycero-3-phosphocholine + S-adenosyl-L-homocysteine + H(+). Its pathway is phospholipid metabolism; phosphatidylcholine biosynthesis. Functionally, catalyzes the three sequential steps of the methylation pathway for the biosynthesis of phosphatidylcholine, a critical and essential component for membrane structure. Uses S-adenosylmethionine (S-adenosyl-L-methionine, SAM or AdoMet) as the methyl group donor for the methylation of phosphatidylethanolamine (1,2-diacyl-sn-glycero-3-phosphoethanolamine, PE) to phosphatidylmonomethylethanolamine (1,2-diacyl-sn-glycero-3-phospho-N-methylethanolamine, PMME), PMME to phosphatidyldimethylethanolamine (1,2-diacyl-sn-glycero-3-phospho-N,N-dimethylethanolamine, PDME), and PDME to phosphatidylcholine (1,2-diacyl-sn-glycero-3-phosphocholine, PC), producing S-adenosyl-L-homocysteine in each step. This is Phosphatidylethanolamine N-methyltransferase from Rattus norvegicus (Rat).